Here is a 308-residue protein sequence, read N- to C-terminus: Elongation factor Ts (308 aa).

Residues 80-83 are involved in Mg(2+) ion dislocation from EF-Tu; it reads TDFV.

The protein belongs to the EF-Ts family.

Its subcellular location is the cytoplasm. Its function is as follows. Associates with the EF-Tu.GDP complex and induces the exchange of GDP to GTP. It remains bound to the aminoacyl-tRNA.EF-Tu.GTP complex up to the GTP hydrolysis stage on the ribosome. The sequence is that of Elongation factor Ts from Erythrobacter litoralis (strain HTCC2594).